The primary structure comprises 1133 residues: Envelopment polyprotein (1133 aa).

A signal peptide spans 1–17; that stretch reads MWSLLLLAALVGQGFAL. Topologically, residues 18–484 are lumenal; sequence KNVFDMRIQC…PGFHGWATAA (467 aa). Cystine bridges form between Cys27–Cys149, Cys61–Cys155, Cys107–Cys126, Cys131–Cys136, Cys173–Cys183, Cys208–Cys245, Cys232–Cys349, Cys374–Cys433, Cys378–Cys387, Cys403–Cys422, and Cys450–Cys473. N-linked (GlcNAc...) asparagine; by host glycosylation occurs at Asn132. Asn233 and Asn345 each carry an N-linked (GlcNAc...) asparagine; by host glycan. The N-linked (GlcNAc...) asparagine; by host glycan is linked to Asn397. Residues 485 to 504 traverse the membrane as a helical segment; sequence LLITFCFGWVLIPACTLAIL. Residues 505 to 626 lie on the Cytoplasmic side of the membrane; that stretch reads LVLKFFANIL…NLFRYKSRCY (122 aa). A binding to the ribonucleoprotein region spans residues 514-531; sequence LHTSNQENRFKAILRKIK. 2 CCHC-type zinc fingers span residues 543–563 and 568–589; these read CEIC…NLSC and CPYC…YKVC. 3 binding to the ribonucleoprotein regions span residues 586–603, 590–601, and 609–623; these read YKVC…KKTV, QATHRFREDLKK, and GPGC…RYKS. Residues 609 to 632 form the ITAM domain; sequence GPGCYRTLNLFRYKSRCYILTMWT. The YxxL motif lies at 613–616; that stretch reads YRTL. The chain crosses the membrane as a helical span at residues 627-647; the sequence is ILTMWTLLLIIESILWAASAA. The Lumenal portion of the chain corresponds to 648–1104; that stretch reads EIPLVPLWTD…WVMGIINGNW (457 aa). Intrachain disulfides connect Cys733–Cys768, Cys737–Cys775, Cys749–Cys883, Cys763–Cys894, Cys778–Cys902, Cys804–Cys813, Cys821–Cys830, and Cys861–Cys865. Positions 755-775 are fusion loop; that stretch reads YEYENSWACNPPDCPGVGTGC. N-linked (GlcNAc...) asparagine; by host glycosylation is present at Asn926. 5 disulfide bridges follow: Cys968–Cys998, Cys991–Cys1043, Cys1008–Cys1013, Cys1044–Cys1049, and Cys1083–Cys1087. The helical transmembrane segment at 1105-1125 threads the bilayer; that stretch reads VVLIVLCVLLLFSLILLSILC. The binding to the ribonucleoprotein stretch occupies residues 1120–1133; sequence LLSILCPVRKHKKS. Residues 1126 to 1133 lie on the Cytoplasmic side of the membrane; that stretch reads PVRKHKKS.

This sequence belongs to the hantavirus envelope glycoprotein family. In terms of assembly, homodimer. Homotetramer; forms heterotetrameric Gn-Gc spikes in the pre-fusion conformation. Interacts (via C-terminus) with the nucleoprotein. Interacts with host TUFM; this interaction contributes to the virus-induced degradation of mitochondria by autophagy, which leads to degradation of host MAVS and inhibition of type I interferon (IFN) responses. Interacts with host MAP1LC3B; this interaction contributes to the virus-induced degradation of mitochondria by autophagy, which leads to degradation of host MAVS and inhibition of type I interferon (IFN) responses. As to quaternary structure, homodimer. Homotetramer; forms heterotetrameric Gn-Gc spikes in the pre-fusion conformation. Homotrimer; forms homotrimer in the post-fusion conformation at acidic pH. Interacts (via C-terminus) with the nucleoprotein. Envelope polyprotein precursor is quickly cleaved in vivo just after synthesis, presumably by host signal peptidase.

Its subcellular location is the virion membrane. It localises to the host cell surface. It is found in the host Golgi apparatus membrane. The protein resides in the host endoplasmic reticulum membrane. The protein localises to the host mitochondrion. Its function is as follows. Forms homotetramers with glycoprotein C at the surface of the virion. Attaches the virion to host cell receptors including integrin ITGAV/ITGB3. This attachment induces virion internalization predominantly through clathrin-dependent endocytosis. Mediates the assembly and budding of infectious virus particles through its interaction with the nucleocapsid protein and the viral genome. May dysregulate normal immune and endothelial cell responses through an ITAM motif. Translocates to mitochondria, binds to host TUFM and recruits MAP1LC3B. These interactions induce mitochondrial autophagy and therefore destruction of host MAVS leading to inhibition of type I interferon (IFN) responses. Concomitant breakdown of glycoprotein N is apparently prevented by the nucleoprotein that may inhibit Gn-stimulated autophagosome-lysosome fusion. Interacts with the viral genomic RNA. Forms homotetramers with glycoprotein N at the surface of the virion. Attaches the virion to host cell receptors including integrin ITGAV/ITGB3. This attachment induces virion internalization predominantly through clathrin-dependent endocytosis. Class II fusion protein that promotes fusion of viral membrane with host endosomal membrane after endocytosis of the virion. The polypeptide is Envelopment polyprotein (GP) (Homo sapiens (Human)).